The following is a 213-amino-acid chain: 3-oxoadipate CoA-transferase subunit B (213 aa).

Glu-50 is a catalytic residue.

Belongs to the 3-oxoacid CoA-transferase subunit B family. As to quaternary structure, heterodimer.

It catalyses the reaction 3-oxoadipate + succinyl-CoA = 3-oxoadipyl-CoA + succinate. It participates in aromatic compound metabolism; beta-ketoadipate pathway; acetyl-CoA and succinyl-CoA from 3-oxoadipate: step 1/2. This is 3-oxoadipate CoA-transferase subunit B (pcaJ) from Pseudomonas putida (strain ATCC 47054 / DSM 6125 / CFBP 8728 / NCIMB 11950 / KT2440).